The primary structure comprises 240 residues: Protein unc-119 homolog A (240 aa).

Residues 1–12 (MKVKKGGGGTGP) are compositionally biased toward gly residues. Residues 1-62 (MKVKKGGGGT…PLQGKQPIGP (62 aa)) form a disordered region. Residues Ser37, Ser39, and Ser41 each carry the phosphoserine; by CK2 modification. Residue Tyr131 participates in tetradecanoate binding.

It belongs to the PDE6D/unc-119 family. Interacts with CABP4; in the absence of calcium. May interact with GTP-bound ARL1. Interacts with ARL2 and ARL3 (GTP-bound forms); this promotes the release of myristoylated cargo proteins. Found in a complex with ARL3, RP2 and UNC119; RP2 induces hydrolysis of GTP ARL3 in the complex, leading to the release of UNC119. Interacts with NPHP3 (when myristoylated). Interacts with CYS1 (when myristoylated). Interacts with MACIR; interaction only takes place when UNC119 is not liganded with myristoylated proteins. Interacts with ARL1 and ARL3 GTP-bound forms. Interacts with ARL2. Interacts with ARL2. Interacts with LCK; this interaction plays a crucial role in activation of LCK. Interacts with FYN. Interacts with RAB11A; in a cell cycle-dependent manner. Interacts with LYN (via SH2 and SH3 domains); leading to LYN activation. Interacts with DNM1; leading to a decrease of DNM1 GTPase activity. Found in a complex with ABL1, ABL2, CRK and UNC119; leading to the inhibition of CRK phosphorylation by ABL kinases. Interacts with CD44. Interacts with KLHL18 (via kelch repeats). Interacts with PPP3CA, PPP3CB and PPP3CC. Interacts with USP48; this interaction promotes UNC119 stability. Post-translationally, phosphorylation suppresses its interaction with KLHL18 and down-regulates its KLHL18-mediated degradation. Phosphorylated more under light conditions than dark conditions. Dephosphorylated by calcineurin.

Its subcellular location is the cytoplasm. The protein localises to the cytoskeleton. It is found in the microtubule organizing center. It localises to the centrosome. The protein resides in the spindle. Its subcellular location is the spindle pole. In terms of biological role, involved in synaptic functions in photoreceptor cells, the signal transduction in immune cells as a Src family kinase activator, endosome recycling, the uptake of bacteria and endocytosis, protein trafficking in sensory neurons and as lipid-binding chaperone with specificity for a diverse subset of myristoylated proteins. Specifically binds the myristoyl moiety of a subset of N-terminally myristoylated proteins and is required for their localization. Binds myristoylated GNAT1 and is required for G-protein localization and trafficking in sensory neurons. Probably plays a role in trafficking proteins in photoreceptor cells. Plays important roles in mediating Src family kinase signals for the completion of cytokinesis via RAB11A. The chain is Protein unc-119 homolog A (Unc119) from Rattus norvegicus (Rat).